The following is a 60-amino-acid chain: MAVQQNKKTPSKRGMHRSHDFLVAPQLSVEQTTGETHMRHHISPNGFYRGRKVLKTKNDE.

The disordered stretch occupies residues 1–60; sequence MAVQQNKKTPSKRGMHRSHDFLVAPQLSVEQTTGETHMRHHISPNGFYRGRKVLKTKNDE. Basic residues predominate over residues 49–60; the sequence is RGRKVLKTKNDE.

Belongs to the bacterial ribosomal protein bL32 family.

The chain is Large ribosomal subunit protein bL32 from Herminiimonas arsenicoxydans.